Consider the following 942-residue polypeptide: AP-1 complex subunit beta (942 aa).

HEAT repeat units lie at residues 45–82, 117–154, 156–193, 273–313, 384–421, and 458–495; these read KDVS…NHPD, NITE…VNPE, VENQ…VSKK, DVIR…KRPE, RASE…KYPN, and DNAH…KRPK. The tract at residues 590–700 is disordered; that stretch reads GLRNKEEEDE…NDLSFLGGGG (111 aa). Residues 596–609 show a composition bias toward acidic residues; it reads EEDEEEPDYVDDDN. Low complexity-rich tracts occupy residues 613 to 645 and 664 to 677; these read QQGG…QQQP and NNNN…NNNN. The span at 678-693 shows a compositional bias: polar residues; sequence MYSPQPQQFNGNSNDL.

This sequence belongs to the adaptor complexes large subunit family. Adaptor protein complex 1 (AP-1) is a heterotetramer composed of two large adaptins (gamma-type subunit and beta-type subunit), a medium adaptin (mu-type subunit) and a small adaptin (sigma-type subunit).

Its subcellular location is the golgi apparatus. The protein resides in the trans-Golgi network. The protein localises to the cytoplasmic vesicle. It localises to the clathrin-coated vesicle membrane. Subunit of clathrin-associated adaptor protein complex 1 that plays a role in protein sorting in the trans-Golgi network (TGN) and endosomes. The AP complexes mediate the recruitment of clathrin to membranes and the recognition of sorting signals within the cytosolic tails of transmembrane cargo molecules. Also involved in early steps of phagocytosis and macropinocytosis. The sequence is that of AP-1 complex subunit beta (ap1b1) from Dictyostelium discoideum (Social amoeba).